The following is a 44-amino-acid chain: Small ribosomal subunit protein eS7 (44 aa).

A compositionally biased stretch (basic residues) spans 18–34 (KPTRKSRIKNKQKRPRS). The interval 18–44 (KPTRKSRIKNKQKRPRSRTLTAVHDAI) is disordered.

It belongs to the eukaryotic ribosomal protein eS7 family. In terms of assembly, component of the small ribosomal subunit.

It is found in the cytoplasm. The protein localises to the cytoskeleton. It localises to the microtubule organizing center. The protein resides in the centrosome. Its subcellular location is the nucleus. In terms of biological role, component of the small ribosomal subunit. The ribosome is a large ribonucleoprotein complex responsible for the synthesis of proteins in the cell. Required for rRNA maturation. The polypeptide is Small ribosomal subunit protein eS7 (rps7) (Salmo salar (Atlantic salmon)).